The primary structure comprises 200 residues: Dephospho-CoA kinase (200 aa).

In terms of domain architecture, DPCK spans 4–200; the sequence is TIGLTGSVAT…TFIERFVNNK (197 aa). 12 to 17 is an ATP binding site; sequence ATGKST.

This sequence belongs to the CoaE family.

The protein resides in the cytoplasm. The enzyme catalyses 3'-dephospho-CoA + ATP = ADP + CoA + H(+). The protein operates within cofactor biosynthesis; coenzyme A biosynthesis; CoA from (R)-pantothenate: step 5/5. In terms of biological role, catalyzes the phosphorylation of the 3'-hydroxyl group of dephosphocoenzyme A to form coenzyme A. In Listeria innocua serovar 6a (strain ATCC BAA-680 / CLIP 11262), this protein is Dephospho-CoA kinase.